The primary structure comprises 382 residues: Mannitol-1-phosphate 5-dehydrogenase (382 aa).

An NAD(+)-binding site is contributed by 4 to 15 (AVHFGAGNIGRG).

Belongs to the mannitol dehydrogenase family. As to quaternary structure, monomer.

The enzyme catalyses D-mannitol 1-phosphate + NAD(+) = beta-D-fructose 6-phosphate + NADH + H(+). In Streptococcus mutans serotype c (strain ATCC 700610 / UA159), this protein is Mannitol-1-phosphate 5-dehydrogenase (mtlD).